We begin with the raw amino-acid sequence, 237 residues long: Cysteine-rich venom protein DIS3 (237 aa).

The N-terminal stretch at 1–18 (MFVFILLSLAAVLQQSFG) is a signal peptide. Residues 37–165 (VDKHNAFRRS…SYDYFYVCQY (129 aa)) form the SCP domain. 7 cysteine pairs are disulfide-bonded: cysteine 74–cysteine 152, cysteine 91–cysteine 166, cysteine 147–cysteine 163, cysteine 185–cysteine 192, cysteine 188–cysteine 197, cysteine 201–cysteine 234, and cysteine 219–cysteine 232. The region spanning 201-234 (CSREDVFTNCKSLVAKSNCQDDYIRKNCLATCFC) is the ShKT domain.

Belongs to the CRISP family. In terms of tissue distribution, expressed by the venom gland.

The protein resides in the secreted. Functionally, weakly blocks contraction of smooth muscle elicited by high potassium-induced depolarization, but does not block caffeine-stimulated contraction. May target voltage-gated calcium channels on smooth muscle. The protein is Cysteine-rich venom protein DIS3 of Dispholidus typus (Boomslang).